The following is a 549-amino-acid chain: Neurofilament light polypeptide (549 aa).

Ser-2 carries the N-acetylserine modification. Residues 2-92 (SSFYSEPYYS…KSIRTQEKAQ (91 aa)) form a head region. O-linked (GlcNAc) threonine glycosylation occurs at Thr-21. Arg-23 carries the post-translational modification Asymmetric dimethylarginine; alternate. Arg-23 carries the omega-N-methylarginine; alternate modification. The O-linked (GlcNAc) serine glycan is linked to Ser-27. Arg-30 is subject to Omega-N-methylarginine. Tyr-43 is subject to Phosphotyrosine. A phosphoserine mark is found at Ser-56, Ser-66, and Ser-102. The region spanning 89–400 (EKAQLQDLND…KLLEGEETRL (312 aa)) is the IF rod domain. The tract at residues 93–124 (LQDLNDRFASFIERVHELEQQNKVLEAQLLVL) is coil 1A. The linker 1 stretch occupies residues 125–137 (RQKHSEPSRFRAL). The interval 138–233 (YEQEIRDLRL…KVHEEEIAEL (96 aa)) is coil 1B. The segment at 234 to 252 (QAQIQYAQISVEMDVSSKP) is linker 12. Residues 253–271 (DLSAALKDIRAQYEKLAAK) form a coil 2A region. The segment at 272–280 (NMQNAEEWF) is linker 2. Residues 281-396 (KSRFTVLTES…AAYRKLLEGE (116 aa)) form a coil 2B region. Positions 381-391 (ALDIEIAAYRK) are epitope; recognized by IF-specific monoclonal antibody. Residues 397–443 (ETRLSFTSVGSLTTGYSQSSQVFGRSAYGGLQTSSYLMSTRSFPSYY) are tail, subdomain A. A tail region spans residues 397–549 (ETRLSFTSVG…GEEQATKKKD (153 aa)). The segment at 444–549 (TSHVQEEQIE…GEEQATKKKD (106 aa)) is tail, subdomain B (acidic). The interval 462–549 (KAEEAKDEPP…GEEQATKKKD (88 aa)) is disordered. The segment covering 471–534 (PSEGEAEEEG…ETKEAEEEEK (64 aa)) has biased composition (acidic residues). Phosphoserine is present on Ser-472. Thr-526 is subject to Phosphothreonine. The span at 535–549 (KDEGAGEEQATKKKD) shows a compositional bias: basic and acidic residues.

Belongs to the intermediate filament family. In terms of assembly, forms homodimers (in vitro). Forms heterodimers with NEFH or NEFM; which can further hetero-oligomerize (in vitro). Forms heterodimers with INA (in vitro). Interacts with ARHGEF28. Interacts with TRIM2. In terms of processing, O-glycosylated. Phosphorylated in the head and rod regions by the PKC kinase PKN1, leading to the inhibition of polymerization. Post-translationally, ubiquitinated in the presence of TRIM2 and UBE2D1.

Its subcellular location is the cell projection. The protein localises to the axon. It is found in the cytoplasm. It localises to the cytoskeleton. Neurofilaments usually contain three intermediate filament proteins: NEFL, NEFM, and NEFH which are involved in the maintenance of neuronal caliber. May additionally cooperate with the neuronal intermediate filament proteins PRPH and INA to form neuronal filamentous networks. This chain is Neurofilament light polypeptide (NEFL), found in Sus scrofa (Pig).